A 274-amino-acid polypeptide reads, in one-letter code: Diaminopimelate epimerase (274 aa).

Substrate-binding residues include asparagine 11, glutamine 44, and asparagine 64. Cysteine 73 acts as the Proton donor in catalysis. Residues 74 to 75, asparagine 157, asparagine 190, and 208 to 209 contribute to the substrate site; these read GN and ER. Residue cysteine 217 is the Proton acceptor of the active site. Residue 218 to 219 coordinates substrate; the sequence is GS.

The protein belongs to the diaminopimelate epimerase family. In terms of assembly, homodimer.

Its subcellular location is the cytoplasm. It catalyses the reaction (2S,6S)-2,6-diaminopimelate = meso-2,6-diaminopimelate. Its pathway is amino-acid biosynthesis; L-lysine biosynthesis via DAP pathway; DL-2,6-diaminopimelate from LL-2,6-diaminopimelate: step 1/1. Its function is as follows. Catalyzes the stereoinversion of LL-2,6-diaminopimelate (L,L-DAP) to meso-diaminopimelate (meso-DAP), a precursor of L-lysine and an essential component of the bacterial peptidoglycan. In Serratia proteamaculans (strain 568), this protein is Diaminopimelate epimerase.